We begin with the raw amino-acid sequence, 23 residues long: DVNGGWSCATTVDAKFRPNGCTD.

A disulfide bridge links Cys-8 with Cys-21.

The protein belongs to the N-Me-Phe pilin family. As to quaternary structure, the pili are polar flexible filaments of about 5.4 nanometers diameter and 2.5 micrometers average length; they consist of only a single polypeptide chain arranged in a helical configuration of five subunits per turn in the assembled pilus.

It is found in the fimbrium. This Pseudomonas aeruginosa protein is Fimbrial protein (pil).